The following is a 368-amino-acid chain: Isopentenyl-diphosphate delta-isomerase (368 aa).

Residue Arg7–Lys8 coordinates substrate. Residues Thr65, Gly66–Thr68, Ser96, and Asn125 each bind FMN. A substrate-binding site is contributed by Ser96 to Arg98. Position 160 (Gln160) interacts with substrate. Glu161 is a Mg(2+) binding site. Residues Lys193, Ser218, Thr223, Gly275–Arg277, and Ala296–Leu297 contribute to the FMN site.

The protein belongs to the IPP isomerase type 2 family. Homooctamer. Dimer of tetramers. Requires FMN as cofactor. NADPH is required as a cofactor. The cofactor is Mg(2+).

It is found in the cytoplasm. The enzyme catalyses isopentenyl diphosphate = dimethylallyl diphosphate. Its function is as follows. Involved in the biosynthesis of isoprenoids. Catalyzes the 1,3-allylic rearrangement of the homoallylic substrate isopentenyl (IPP) to its allylic isomer, dimethylallyl diphosphate (DMAPP). The polypeptide is Isopentenyl-diphosphate delta-isomerase (Saccharolobus shibatae (strain ATCC 51178 / DSM 5389 / JCM 8931 / NBRC 15437 / B12) (Sulfolobus shibatae)).